We begin with the raw amino-acid sequence, 493 residues long: Glycylpeptide N-tetradecanoyltransferase (493 aa).

The segment at 1–30 (MSDSKDSKGKAPQKPNDAEQTPGGKLTPQA) is disordered. Residues 82 to 85 (FKFW), 216 to 218 (LCI), and 224 to 228 (SKRLA) each bind tetradecanoyl-CoA. The active-site Proton acceptor; via carboxylate is the Leu-493.

The protein belongs to the NMT family. Monomer.

It is found in the cytoplasm. The enzyme catalyses N-terminal glycyl-[protein] + tetradecanoyl-CoA = N-tetradecanoylglycyl-[protein] + CoA + H(+). Functionally, adds a myristoyl group to the N-terminal glycine residue of certain cellular proteins. In Emericella nidulans (strain FGSC A4 / ATCC 38163 / CBS 112.46 / NRRL 194 / M139) (Aspergillus nidulans), this protein is Glycylpeptide N-tetradecanoyltransferase (swoF).